We begin with the raw amino-acid sequence, 339 residues long: Phenylalanine--tRNA ligase alpha subunit (339 aa).

A Mg(2+)-binding site is contributed by Glu-254.

It belongs to the class-II aminoacyl-tRNA synthetase family. Phe-tRNA synthetase alpha subunit type 1 subfamily. Tetramer of two alpha and two beta subunits. It depends on Mg(2+) as a cofactor.

The protein localises to the cytoplasm. The catalysed reaction is tRNA(Phe) + L-phenylalanine + ATP = L-phenylalanyl-tRNA(Phe) + AMP + diphosphate + H(+). This Clostridium acetobutylicum (strain ATCC 824 / DSM 792 / JCM 1419 / IAM 19013 / LMG 5710 / NBRC 13948 / NRRL B-527 / VKM B-1787 / 2291 / W) protein is Phenylalanine--tRNA ligase alpha subunit.